The following is a 253-amino-acid chain: Indole-3-glycerol phosphate synthase (253 aa).

It belongs to the TrpC family.

It carries out the reaction 1-(2-carboxyphenylamino)-1-deoxy-D-ribulose 5-phosphate + H(+) = (1S,2R)-1-C-(indol-3-yl)glycerol 3-phosphate + CO2 + H2O. Its pathway is amino-acid biosynthesis; L-tryptophan biosynthesis; L-tryptophan from chorismate: step 4/5. In Bacillus cereus (strain B4264), this protein is Indole-3-glycerol phosphate synthase.